The sequence spans 146 residues: Large ribosomal subunit protein uL15 (146 aa).

The segment covering 1-13 (MKLHELQPAEGSR) has biased composition (basic and acidic residues). The disordered stretch occupies residues 1–58 (MKLHELQPAEGSRKVRNRVGRGIGSGNGKTAGKGHKGQKARSGGGVRPGFEGGQNPLY). Gly residues-rich tracts occupy residues 21 to 31 (RGIGSGNGKTA) and 42 to 52 (SGGGVRPGFEG).

This sequence belongs to the universal ribosomal protein uL15 family. Part of the 50S ribosomal subunit.

Its function is as follows. Binds to the 23S rRNA. The chain is Large ribosomal subunit protein uL15 from Shouchella clausii (strain KSM-K16) (Alkalihalobacillus clausii).